Here is a 222-residue protein sequence, read N- to C-terminus: Ribosomal RNA large subunit methyltransferase E (222 aa).

Basic and acidic residues predominate over residues 1-13; that stretch reads MSRSDKNPHERLK. Residues 1–22 form a disordered region; it reads MSRSDKNPHERLKTAKKRTASS. 5 residues coordinate S-adenosyl-L-methionine: Gly-75, Trp-77, Asp-94, Asp-110, and Asp-134. The active-site Proton acceptor is Lys-174.

It belongs to the class I-like SAM-binding methyltransferase superfamily. RNA methyltransferase RlmE family.

It localises to the cytoplasm. The catalysed reaction is uridine(2552) in 23S rRNA + S-adenosyl-L-methionine = 2'-O-methyluridine(2552) in 23S rRNA + S-adenosyl-L-homocysteine + H(+). Functionally, specifically methylates the uridine in position 2552 of 23S rRNA at the 2'-O position of the ribose in the fully assembled 50S ribosomal subunit. This Novosphingobium aromaticivorans (strain ATCC 700278 / DSM 12444 / CCUG 56034 / CIP 105152 / NBRC 16084 / F199) protein is Ribosomal RNA large subunit methyltransferase E.